The chain runs to 329 residues: MAQSTLYSRVLGTGSYLPPDRVTNQELADRLAKDGIETSDEWIVARTGIRARHFAAPDVTTSDLALVAAQRAIEAADVDPQSIDLIIVATSTPDFVFPSTACLLQNKLGIKNGGAAFDVQAVCSGFAYALATADSFIRTGQHRTALVIGAEAFSRILDFKDRTTCVLFGDGAGAVVLSASEEPGILGSALHADGSYSNILCTPGNVNRGVIAGSAFLHMDGQAVFKLAVNVLEKVAVEALSKAELASEQVDWLIPHQANIRIMTSTCRKLGLPQERMIVTVDEHGNTSAASIPLALDVAVRDGRIKRGQHVLIEGVGGGFTWGASVFRF.

Catalysis depends on residues Cys123 and His256. Residues 257-261 form an ACP-binding region; that stretch reads QANIR. Asn286 is a catalytic residue.

Belongs to the thiolase-like superfamily. FabH family. As to quaternary structure, homodimer.

Its subcellular location is the cytoplasm. It catalyses the reaction malonyl-[ACP] + acetyl-CoA + H(+) = 3-oxobutanoyl-[ACP] + CO2 + CoA. It functions in the pathway lipid metabolism; fatty acid biosynthesis. Functionally, catalyzes the condensation reaction of fatty acid synthesis by the addition to an acyl acceptor of two carbons from malonyl-ACP. Catalyzes the first condensation reaction which initiates fatty acid synthesis and may therefore play a role in governing the total rate of fatty acid production. Possesses both acetoacetyl-ACP synthase and acetyl transacylase activities. Its substrate specificity determines the biosynthesis of branched-chain and/or straight-chain of fatty acids. The protein is Beta-ketoacyl-[acyl-carrier-protein] synthase III of Burkholderia mallei (strain NCTC 10247).